Consider the following 534-residue polypeptide: Probable alpha-galactosidase A (534 aa).

Residues 1-25 (MRLITRWIPLANALASTMPVQVVAS) form the signal peptide. Cysteine 47 and cysteine 79 are disulfide-bonded. 4 N-linked (GlcNAc...) asparagine glycosylation sites follow: asparagine 50, asparagine 88, asparagine 94, and asparagine 124. The cysteines at positions 127 and 157 are disulfide-linked. The Nucleophile role is filled by aspartate 155. Asparagine 204 carries N-linked (GlcNAc...) asparagine glycosylation. Aspartate 213 (proton donor) is an active-site residue. Residues 413–534 (CSQVIPTGLI…GLPAGVHVAL (122 aa)) enclose the Ricin B-type lectin domain. Cysteine 430 and cysteine 443 form a disulfide bridge. Asparagine 444 is a glycosylation site (N-linked (GlcNAc...) asparagine). The cysteines at positions 468 and 481 are disulfide-linked.

The protein belongs to the glycosyl hydrolase 27 family.

It localises to the secreted. It carries out the reaction Hydrolysis of terminal, non-reducing alpha-D-galactose residues in alpha-D-galactosides, including galactose oligosaccharides, galactomannans and galactolipids.. Its function is as follows. Hydrolyzes a variety of simple alpha-D-galactoside as well as more complex molecules such as oligosaccharides and polysaccharides. This is Probable alpha-galactosidase A (aglA) from Aspergillus flavus (strain ATCC 200026 / FGSC A1120 / IAM 13836 / NRRL 3357 / JCM 12722 / SRRC 167).